The following is a 404-amino-acid chain: Cysteine desulfurase IscS (404 aa).

Pyridoxal 5'-phosphate contacts are provided by residues 75–76, asparagine 155, glutamine 183, and 203–205; these read AT and SGH. An N6-(pyridoxal phosphate)lysine modification is found at lysine 206. Threonine 243 provides a ligand contact to pyridoxal 5'-phosphate. The active-site Cysteine persulfide intermediate is cysteine 328. Position 328 (cysteine 328) interacts with [2Fe-2S] cluster.

The protein belongs to the class-V pyridoxal-phosphate-dependent aminotransferase family. NifS/IscS subfamily. Homodimer. Forms a heterotetramer with IscU, interacts with other sulfur acceptors. Pyridoxal 5'-phosphate is required as a cofactor.

The protein localises to the cytoplasm. It carries out the reaction (sulfur carrier)-H + L-cysteine = (sulfur carrier)-SH + L-alanine. It participates in cofactor biosynthesis; iron-sulfur cluster biosynthesis. Functionally, master enzyme that delivers sulfur to a number of partners involved in Fe-S cluster assembly, tRNA modification or cofactor biosynthesis. Catalyzes the removal of elemental sulfur atoms from cysteine to produce alanine. Functions as a sulfur delivery protein for Fe-S cluster synthesis onto IscU, an Fe-S scaffold assembly protein, as well as other S acceptor proteins. This Shewanella pealeana (strain ATCC 700345 / ANG-SQ1) protein is Cysteine desulfurase IscS.